The sequence spans 550 residues: Arginine--tRNA ligase (550 aa).

Residues 122–132 (GNPTGPLHLAH) carry the 'HIGH' region motif.

The protein belongs to the class-I aminoacyl-tRNA synthetase family. As to quaternary structure, monomer.

The protein resides in the cytoplasm. It catalyses the reaction tRNA(Arg) + L-arginine + ATP = L-arginyl-tRNA(Arg) + AMP + diphosphate. The protein is Arginine--tRNA ligase of Tropheryma whipplei (strain TW08/27) (Whipple's bacillus).